Here is a 252-residue protein sequence, read N- to C-terminus: 14-3-3-like protein GF14 omicron (252 aa).

Phosphoserine is present on residues serine 65 and serine 188.

It belongs to the 14-3-3 family.

It is found in the nucleus. Its subcellular location is the cytoplasm. Is associated with a DNA binding complex that binds to the G box, a well-characterized cis-acting DNA regulatory element found in plant genes. This is 14-3-3-like protein GF14 omicron (GRF11) from Arabidopsis thaliana (Mouse-ear cress).